An 803-amino-acid chain; its full sequence is MKFSESWIREWVNPPIDHDQLIDQFTLAGLNVEESRKLNSNKFYGIVIAKIIECQVHPSLADTWIMTVNSGGGNIINIITNNMNYNKNTKVVVANIGAILPNGNIIKQINIQGRKSEGVLCTFSMLGLNYYTQKGIIELPIDAPIGCNFYDYLHFNDNIIDINITPNRGDCLSVIGLSREIAAINQCKLKKINIKSNVPNILDTIPIIIETPHDCPKFLGKVLKNIDITIPTPLKIQEKLIRCGIQPINIITDIANYVLLELGQPVRIFDYEKIDKNIIYVRFSKPGETLTLSENNINIKLFSKTLVISDVRKPLAIAGVITGNQSSVSCSTHNIFLKVAFFNPLTIINQYKLYNLYTSSVVRYEKGIDPDISELALNYATSLLIKYCHGKAGPTINIISHNHLPKIKIIKLHRSKLNMILGFYIPDQKIINILTNLGFQVETQGHNWIVSTPSWRFDINIEENVISEIIRIYGYNHIPKIPAKISLNQTVQCIPNQVISLSKSKTVLIARGYQEIITYSFVDPNIQKLLHPQCIPLTLMNPISTNMSVMRLSLWTGLIQTMLYNQNRQHKNIKLFESGICFIPKNSHSKQVSQQLRLSGIRSGLRHYEHWDIHTSLTDFYDIKGDVESILYLFNKKNQNNNIHFKSCTYPALHPGQSAEIYLNDIFLGYVGVIHPMIQYKLRIHSNVLVFELIWDSIVNIKSQKIIDISKFPKNYRDISLIIPTHISASSVIETCKKIGIINLTEVKLIDVYTGRNIPTNFKSLTIKLTLQSKTHTLKEQEIKEIIIICTTTLKKHFNAIFR.

The region spanning serine 40–tyrosine 150 is the tRNA-binding domain. One can recognise a B5 domain in the interval proline 405–lysine 480. Residues aspartate 458 and glutamate 468 each coordinate Mg(2+). The region spanning serine 710–arginine 803 is the FDX-ACB domain.

It belongs to the phenylalanyl-tRNA synthetase beta subunit family. Type 1 subfamily. As to quaternary structure, tetramer of two alpha and two beta subunits. It depends on Mg(2+) as a cofactor.

The protein resides in the cytoplasm. The enzyme catalyses tRNA(Phe) + L-phenylalanine + ATP = L-phenylalanyl-tRNA(Phe) + AMP + diphosphate + H(+). The protein is Phenylalanine--tRNA ligase beta subunit of Blochmanniella floridana.